A 142-amino-acid chain; its full sequence is Translation initiation factor 2 subunit beta (142 aa).

It belongs to the eIF-2-beta/eIF-5 family. As to quaternary structure, heterotrimer composed of an alpha, a beta and a gamma chain.

Functionally, eIF-2 functions in the early steps of protein synthesis by forming a ternary complex with GTP and initiator tRNA. This chain is Translation initiation factor 2 subunit beta, found in Thermococcus kodakarensis (strain ATCC BAA-918 / JCM 12380 / KOD1) (Pyrococcus kodakaraensis (strain KOD1)).